Reading from the N-terminus, the 255-residue chain is 5'-nucleotidase SurE (255 aa).

Positions 8, 9, 40, and 93 each coordinate a divalent metal cation.

This sequence belongs to the SurE nucleotidase family. The cofactor is a divalent metal cation.

Its subcellular location is the cytoplasm. The catalysed reaction is a ribonucleoside 5'-phosphate + H2O = a ribonucleoside + phosphate. Nucleotidase that shows phosphatase activity on nucleoside 5'-monophosphates. The protein is 5'-nucleotidase SurE of Nitrobacter winogradskyi (strain ATCC 25391 / DSM 10237 / CIP 104748 / NCIMB 11846 / Nb-255).